Reading from the N-terminus, the 759-residue chain is Glucosylceramidase (759 aa).

The active-site Proton donor is the E247. Residue E497 is the Nucleophile of the active site. The disordered stretch occupies residues 576 to 600 (AFENESQRDPQSPAYSESQRNTESY). The segment covering 584 to 599 (DPQSPAYSESQRNTES) has biased composition (polar residues).

It belongs to the glycosyl hydrolase 5 (cellulase A) family.

Its subcellular location is the membrane. The catalysed reaction is a beta-D-glucosyl-(1&lt;-&gt;1')-N-acylsphing-4-enine + H2O = an N-acylsphing-4-enine + D-glucose. Specifically hydrolyzes the glucosidic linkage in glucosylceramide. May prevent accumulation of aberrent glucosylceramide containing immature ceramide. This is Glucosylceramidase from Aspergillus fumigatus (Neosartorya fumigata).